Here is a 126-residue protein sequence, read N- to C-terminus: Large ribosomal subunit protein uL22 (126 aa).

This sequence belongs to the universal ribosomal protein uL22 family. Part of the 50S ribosomal subunit.

Its function is as follows. This protein binds specifically to 23S rRNA; its binding is stimulated by other ribosomal proteins, e.g. L4, L17, and L20. It is important during the early stages of 50S assembly. It makes multiple contacts with different domains of the 23S rRNA in the assembled 50S subunit and ribosome. In terms of biological role, the globular domain of the protein is located near the polypeptide exit tunnel on the outside of the subunit, while an extended beta-hairpin is found that lines the wall of the exit tunnel in the center of the 70S ribosome. The protein is Large ribosomal subunit protein uL22 of Prochlorococcus marinus (strain NATL2A).